A 144-amino-acid polypeptide reads, in one-letter code: Maximins z/Hv (144 aa).

An N-terminal signal peptide occupies residues 1 to 18 (MNFKYIVAVSFLIASGYA). The propeptide occupies 19–43 (RSEENDVQSLSQREVLEEESLREIR). The residue at position 70 (Asn-70) is an Asparagine amide. Residues 74 to 123 (TAEDHEVMKRLKAVMRDLDSLDHPEEASERETRGFNQEEIANLFTKKEKR) constitute a propeptide that is removed on maturation. Ile-143 carries the isoleucine amide modification.

Belongs to the bombinin family. As to expression, expressed by the skin glands.

The protein localises to the secreted. In terms of biological role, maximin-z shows antimicrobial activity against bacteria and against the fungus C.albicans. It has little hemolytic activity. Maximin-Hv shows antimicrobial activity against bacteria and against the fungus C.albicans. Shows strong hemolytic activity. The chain is Maximins z/Hv from Bombina maxima (Giant fire-bellied toad).